A 222-amino-acid chain; its full sequence is Pyridoxine/pyridoxamine 5'-phosphate oxidase (222 aa).

Substrate is bound by residues 16-19 and lysine 75; that span reads RVSY. FMN contacts are provided by residues 70–75, 85–86, lysine 92, and glutamine 114; these read RTVLCK and FT. Residues tyrosine 132, arginine 136, and serine 140 each contribute to the substrate site. Residues 149 to 150 and tryptophan 195 contribute to the FMN site; that span reads QS. 201 to 203 serves as a coordination point for substrate; that stretch reads RLH. Residue arginine 205 coordinates FMN.

It belongs to the pyridoxamine 5'-phosphate oxidase family. In terms of assembly, homodimer. FMN serves as cofactor.

The enzyme catalyses pyridoxamine 5'-phosphate + O2 + H2O = pyridoxal 5'-phosphate + H2O2 + NH4(+). It catalyses the reaction pyridoxine 5'-phosphate + O2 = pyridoxal 5'-phosphate + H2O2. Its pathway is cofactor metabolism; pyridoxal 5'-phosphate salvage; pyridoxal 5'-phosphate from pyridoxamine 5'-phosphate: step 1/1. The protein operates within cofactor metabolism; pyridoxal 5'-phosphate salvage; pyridoxal 5'-phosphate from pyridoxine 5'-phosphate: step 1/1. Functionally, catalyzes the oxidation of either pyridoxine 5'-phosphate (PNP) or pyridoxamine 5'-phosphate (PMP) into pyridoxal 5'-phosphate (PLP). The polypeptide is Pyridoxine/pyridoxamine 5'-phosphate oxidase (Saccharopolyspora erythraea (strain ATCC 11635 / DSM 40517 / JCM 4748 / NBRC 13426 / NCIMB 8594 / NRRL 2338)).